The following is a 465-amino-acid chain: Cysteine--tRNA ligase (465 aa).

Cys-30 provides a ligand contact to Zn(2+). The 'HIGH' region signature appears at 32–42 (MTVYDYCHVGH). Residues Cys-214, His-239, and Glu-243 each coordinate Zn(2+). Positions 271-275 (KMSKS) match the 'KMSKS' region motif. Residue Lys-274 coordinates ATP.

Belongs to the class-I aminoacyl-tRNA synthetase family. As to quaternary structure, monomer. Zn(2+) serves as cofactor.

The protein resides in the cytoplasm. It catalyses the reaction tRNA(Cys) + L-cysteine + ATP = L-cysteinyl-tRNA(Cys) + AMP + diphosphate. The sequence is that of Cysteine--tRNA ligase from Ralstonia nicotianae (strain ATCC BAA-1114 / GMI1000) (Ralstonia solanacearum).